Consider the following 120-residue polypeptide: Large ribosomal subunit protein eL18 (120 aa).

Belongs to the eukaryotic ribosomal protein eL18 family.

In Pyrococcus horikoshii (strain ATCC 700860 / DSM 12428 / JCM 9974 / NBRC 100139 / OT-3), this protein is Large ribosomal subunit protein eL18.